The sequence spans 440 residues: Ribosomal protein uS12 methylthiotransferase RimO (440 aa).

An MTTase N-terminal domain is found at methionine 1–serine 117. [4Fe-4S] cluster-binding residues include cysteine 10, cysteine 46, cysteine 80, cysteine 155, cysteine 159, and cysteine 162. A Radical SAM core domain is found at cysteine 141–arginine 371. Positions alanine 374–glutamine 440 constitute a TRAM domain.

This sequence belongs to the methylthiotransferase family. RimO subfamily. [4Fe-4S] cluster is required as a cofactor.

The protein localises to the cytoplasm. It catalyses the reaction L-aspartate(89)-[ribosomal protein uS12]-hydrogen + (sulfur carrier)-SH + AH2 + 2 S-adenosyl-L-methionine = 3-methylsulfanyl-L-aspartate(89)-[ribosomal protein uS12]-hydrogen + (sulfur carrier)-H + 5'-deoxyadenosine + L-methionine + A + S-adenosyl-L-homocysteine + 2 H(+). In terms of biological role, catalyzes the methylthiolation of an aspartic acid residue of ribosomal protein uS12. The chain is Ribosomal protein uS12 methylthiotransferase RimO from Desulfosudis oleivorans (strain DSM 6200 / JCM 39069 / Hxd3) (Desulfococcus oleovorans).